We begin with the raw amino-acid sequence, 137 residues long: Large ribosomal subunit protein uL16 (137 aa).

Belongs to the universal ribosomal protein uL16 family. Part of the 50S ribosomal subunit.

Binds 23S rRNA and is also seen to make contacts with the A and possibly P site tRNAs. The sequence is that of Large ribosomal subunit protein uL16 from Spiroplasma citri.